The chain runs to 685 residues: Keratin, type II cytoskeletal 2 epidermal (685 aa).

Positions 1–20 (MSCQISCKSRRGGGGGGGGG) are disordered. Residues 1–196 (MSCQISCKSR…DPEIQNVKSQ (196 aa)) form a head region. At Arg-22 the chain carries Asymmetric dimethylarginine. Residues Ser-25 and Ser-28 each carry the phosphoserine modification. Omega-N-methylarginine is present on Arg-52. At Ser-64 the chain carries Phosphoserine. Positions 197–232 (EREQIKTLNNKFASFIDTVRFLEQQNQVLHTKWELL) are coil 1A. The IF rod domain occupies 197 to 511 (EREQIKTLNN…KLLEGEECRM (315 aa)). The linker 1 stretch occupies residues 233 to 251 (QQLDVGTRTTNLDPVFQAY). The tract at residues 252 to 343 (IGILKKQVDR…TLYDTELSQL (92 aa)) is coil 1B. Positions 344 to 367 (QQNVTDTNVILSMDNNRNLDLDSI) are linker 12. The segment at 368–507 (IAEVQSQYEI…ATYRKLLEGE (140 aa)) is coil 2. Residues 508 to 685 (ECRMSGDFSD…CGSGVTFSFR (178 aa)) form a tail region. Positions 532–685 (VASKAGFGSG…CGSGVTFSFR (154 aa)) are disordered. The segment covering 538–678 (FGSGGQSSGG…GSGSGEGCGS (141 aa)) has biased composition (gly residues). Residues Arg-554, Arg-588, Arg-603, and Arg-653 each carry the omega-N-methylarginine modification.

This sequence belongs to the intermediate filament family. Heterotetramer of two type I and two type II keratins. Associates with KRT10.

The protein localises to the cytoplasm. In terms of biological role, probably contributes to terminal cornification. Associated with keratinocyte activation, proliferation and keratinization. Required for maintenance of corneocytes and keratin filaments in suprabasal keratinocytes in the epidermis of the ear, potentially via moderation of expression and localization of keratins and their partner proteins. Plays a role in the establishment of the epidermal barrier on plantar skin. The protein is Keratin, type II cytoskeletal 2 epidermal of Rattus norvegicus (Rat).